The sequence spans 254 residues: Protein odd-skipped-related 2 (254 aa).

C2H2-type zinc fingers lie at residues 124-146 (FICK…ERTH), 152-174 (YSCD…KYIH), and 180-202 (FKCE…RATH).

Belongs to the Odd C2H2-type zinc-finger protein family.

It is found in the nucleus. In terms of biological role, may function as transcription regulator. Required for morphogenesis and function of the digestive tract. The chain is Protein odd-skipped-related 2 from Caenorhabditis elegans.